A 1177-amino-acid chain; its full sequence is Lysylphosphatidylglycerol biosynthesis bifunctional protein LysX (1177 aa).

Disordered stretches follow at residues 1-40 and 61-85; these read MRRA…AKFV and VTLA…PRNR. Residues 1 to 676 are phosphatidylglycerol lysyltransferase; the sequence is MRRAGRSRQF…LLHHDGSAPD (676 aa). Low complexity predominate over residues 65 to 85; it reads SPGSRSGSGPRSGPRLGPRNR. 6 helical membrane-spanning segments follow: residues 93–113, 135–155, 159–179, 189–209, 227–247, and 281–301; these read VPAA…LGSV, FPDT…ALTA, IAWL…VADI, IFGE…LVLA, AVLV…VELF, and VFLN…ATIV. Residues 673-693 form a disordered region; the sequence is SAPDVSGLRPERTDAEEARSR. Residues 677–1177 are lysine--tRNA ligase; that stretch reads VSGLRPERTD…TLPFPLAKPH (501 aa). Over residues 681-693 the composition is skewed to basic and acidic residues; it reads RPERTDAEEARSR. The segment at residues 738-816 is a DNA-binding region (OB); sequence ITVAGRILRI…SLIVTDWRMI (79 aa). Positions 1089 and 1096 each coordinate Mg(2+).

The protein in the N-terminal section; belongs to the LPG synthetase family. It in the C-terminal section; belongs to the class-II aminoacyl-tRNA synthetase family. Requires Mg(2+) as cofactor.

The protein resides in the cell membrane. It catalyses the reaction tRNA(Lys) + L-lysine + ATP = L-lysyl-tRNA(Lys) + AMP + diphosphate. It carries out the reaction L-lysyl-tRNA(Lys) + a 1,2-diacyl-sn-glycero-3-phospho-(1'-sn-glycerol) = a 1,2-diacyl-sn-glycero-3-phospho-1'-(3'-O-L-lysyl)-sn-glycerol + tRNA(Lys). Functionally, catalyzes the production of L-lysyl-tRNA(Lys)transfer and the transfer of a lysyl group from L-lysyl-tRNA(Lys) to membrane-bound phosphatidylglycerol (PG), which produces lysylphosphatidylglycerol (LPG), one of the components of the bacterial membrane with a positive net charge. LPG synthesis contributes to the resistance to cationic antimicrobial peptides (CAMPs) and likely protects M.tuberculosis against the CAMPs produced by competiting microorganisms (bacteriocins). In fact, the modification of anionic phosphatidylglycerol with positively charged L-lysine results in repulsion of the peptides. This chain is Lysylphosphatidylglycerol biosynthesis bifunctional protein LysX (lysX), found in Mycolicibacterium paratuberculosis (strain ATCC BAA-968 / K-10) (Mycobacterium paratuberculosis).